We begin with the raw amino-acid sequence, 363 residues long: Trichothecene biosynthesis protein 14 (363 aa).

Belongs to the TRI14 family.

In terms of biological role, part of the gene cluster that mediates the production of the antimicrobial trichothecene harzianum A (HA) that plays a role in Botrytis cinerea antagonistic activity and plant defense priming. The biosynthesis of harzianum A begins with the cyclization of farnesyl diphosphate to trichodiene and is catalyzed by the trichodiene synthase TRI5. Trichodiene undergoes a series of oxygenations catalyzed by the cytochrome P450 monooxygenase TRI4. TRI4 controls the addition of 3 oxygens at C-2, C-11, and the C-12, C-13-epoxide to form the intermediate isotrichodiol. Isotrichodiol then undergoes a non-enzymatic isomerization and cyclization to form 12,13-epoxytrichothec-9-ene (EPT) which is further converted to trichodermol by the cytochrome P450 monooxygenase TRI11 via C-4 hydroxylation. The last step of HA synthesis is esterification of an octatriendioyl moiety to the C-4 oxygen of trichodermol. The octatriendioyl moiety is probably produced by the polyketide synthase TRI17 and the esterification performed by the trichothecene O-acetyltransferase TRI3. This chain is Trichothecene biosynthesis protein 14, found in Trichoderma arundinaceum.